The sequence spans 68 residues: Large ribosomal subunit protein uL29 (68 aa).

It belongs to the universal ribosomal protein uL29 family.

The sequence is that of Large ribosomal subunit protein uL29 from Bradyrhizobium sp. (strain BTAi1 / ATCC BAA-1182).